Here is a 415-residue protein sequence, read N- to C-terminus: Probable glucuronosyltransferase Os01g0926600 (415 aa).

Residues methionine 1 to arginine 4 are Cytoplasmic-facing. A helical; Signal-anchor for type II membrane protein transmembrane segment spans residues leucine 5–alanine 25. The Lumenal portion of the chain corresponds to arginine 26–tryptophan 415. Residues asparagine 142 and asparagine 403 are each glycosylated (N-linked (GlcNAc...) asparagine).

This sequence belongs to the glycosyltransferase 47 family.

It is found in the golgi apparatus membrane. Functionally, involved in the synthesis of glucuronoxylan hemicellulose in secondary cell walls. The polypeptide is Probable glucuronosyltransferase Os01g0926600 (Oryza sativa subsp. japonica (Rice)).